Consider the following 613-residue polypeptide: Pentatricopeptide repeat-containing protein At2g02750 (613 aa).

PPR repeat units follow at residues 30–64 (NKFT…GFFV), 65–99 (DVFT…GIAS), 101–126 (NAAV…ARVS), 128–162 (SGMN…GFEM), 163–193 (EVYV…VPHK), 194–228 (SVVT…SSEE), 230–264 (NDVT…EFQF), 265–295 (ETMV…LKDT), 297–331 (NLIS…GLKP), 332–366 (DSAT…VMVP), 367–401 (SLKC…AAER), 402–432 (DIFV…FEPK), 435–469 (DPVF…KVEP), 470–500 (SLAT…MQEE), and 506–539 (STEH…PSSS). The type E motif; degenerate stretch occupies residues 540 to 613 (VYSSLLGSCR…VKLPGLSLSG (74 aa)).

It belongs to the PPR family. PCMP-E subfamily.

The protein is Pentatricopeptide repeat-containing protein At2g02750 (PCMP-E22) of Arabidopsis thaliana (Mouse-ear cress).